Reading from the N-terminus, the 65-residue chain is Large ribosomal subunit protein uL29 (65 aa).

This sequence belongs to the universal ribosomal protein uL29 family.

The sequence is that of Large ribosomal subunit protein uL29 from Paracidovorax citrulli (strain AAC00-1) (Acidovorax citrulli).